The primary structure comprises 485 residues: GlcNAc-binding protein A (485 aa).

The signal sequence occupies residues 1–29 (MKKQPQKTLLAIALSVVSGTAMSHGYVSA). Residues 30-200 (VENGVAEARV…SFYNVIDVKF (171 aa)) form the Chitin-binding type-4 domain. The 42-residue stretch at 437 to 478 (ADTKVLASDGAIYQCKPFPYSGYCVQWTPTATQYQPGTGSHW) folds into the Chitin-binding type-3 domain.

This sequence belongs to the GbpA family.

It is found in the secreted. Its function is as follows. Probably interacts with GlcNAc residues. May promote attachment to both epithelial cell surfaces and chitin. The protein is GlcNAc-binding protein A of Vibrio vulnificus (strain CMCP6).